The primary structure comprises 254 residues: MTAAFTVVIPARYGSSRFPGKPLKTIAGKPMVQLVWEQACKSSAERVVIATDDARIVEACQAFGAEVLLTRDDHNSGTDRLAEVAAQLGLAADAIVVNVQGDEPMIPPAVIDQVASNLAAHPEAGMSTLAEPIDDVAALFNPNIVKVATDINGLALTFSRAPLPWARDALAANRDQLPAGVPYRRHIGIYAYRAGFLHDFVSWGPCWLENTESLEQLRALWNGVRIHVADALEAPPGGVDTPEDLERVRRLLEG.

The protein belongs to the KdsB family.

The protein resides in the cytoplasm. The catalysed reaction is 3-deoxy-alpha-D-manno-oct-2-ulosonate + CTP = CMP-3-deoxy-beta-D-manno-octulosonate + diphosphate. Its pathway is nucleotide-sugar biosynthesis; CMP-3-deoxy-D-manno-octulosonate biosynthesis; CMP-3-deoxy-D-manno-octulosonate from 3-deoxy-D-manno-octulosonate and CTP: step 1/1. It functions in the pathway bacterial outer membrane biogenesis; lipopolysaccharide biosynthesis. In terms of biological role, activates KDO (a required 8-carbon sugar) for incorporation into bacterial lipopolysaccharide in Gram-negative bacteria. In Pseudomonas syringae pv. syringae (strain B728a), this protein is 3-deoxy-manno-octulosonate cytidylyltransferase.